The sequence spans 407 residues: Imidazolonepropionase (407 aa).

Residues H75 and H77 each coordinate Fe(3+). Zn(2+) is bound by residues H75 and H77. Residues R84, Y147, and H180 each coordinate 4-imidazolone-5-propanoate. Y147 serves as a coordination point for N-formimidoyl-L-glutamate. H245 contacts Fe(3+). Zn(2+) is bound at residue H245. Q248 contributes to the 4-imidazolone-5-propanoate binding site. D320 contributes to the Fe(3+) binding site. D320 provides a ligand contact to Zn(2+). N-formimidoyl-L-glutamate contacts are provided by N322 and G324. S325 serves as a coordination point for 4-imidazolone-5-propanoate.

It belongs to the metallo-dependent hydrolases superfamily. HutI family. Requires Zn(2+) as cofactor. It depends on Fe(3+) as a cofactor.

The protein resides in the cytoplasm. The catalysed reaction is 4-imidazolone-5-propanoate + H2O = N-formimidoyl-L-glutamate. It functions in the pathway amino-acid degradation; L-histidine degradation into L-glutamate; N-formimidoyl-L-glutamate from L-histidine: step 3/3. Its function is as follows. Catalyzes the hydrolytic cleavage of the carbon-nitrogen bond in imidazolone-5-propanoate to yield N-formimidoyl-L-glutamate. It is the third step in the universal histidine degradation pathway. This Pseudoalteromonas atlantica (strain T6c / ATCC BAA-1087) protein is Imidazolonepropionase.